Consider the following 292-residue polypeptide: Ribosomal protein L11 methyltransferase (292 aa).

4 residues coordinate S-adenosyl-L-methionine: Thr145, Gly166, Asp188, and Asn229.

It belongs to the methyltransferase superfamily. PrmA family.

It localises to the cytoplasm. The catalysed reaction is L-lysyl-[protein] + 3 S-adenosyl-L-methionine = N(6),N(6),N(6)-trimethyl-L-lysyl-[protein] + 3 S-adenosyl-L-homocysteine + 3 H(+). In terms of biological role, methylates ribosomal protein L11. The polypeptide is Ribosomal protein L11 methyltransferase (Nitrosococcus oceani (strain ATCC 19707 / BCRC 17464 / JCM 30415 / NCIMB 11848 / C-107)).